A 196-amino-acid polypeptide reads, in one-letter code: Large ribosomal subunit protein uL5 (196 aa).

It belongs to the universal ribosomal protein uL5 family. As to quaternary structure, part of the 50S ribosomal subunit; part of the 5S rRNA/L5/L18/L25 subcomplex. Contacts the 5S rRNA and the P site tRNA. Forms a bridge to the 30S subunit in the 70S ribosome.

Functionally, this is one of the proteins that bind and probably mediate the attachment of the 5S RNA into the large ribosomal subunit, where it forms part of the central protuberance. In the 70S ribosome it contacts protein S13 of the 30S subunit (bridge B1b), connecting the 2 subunits; this bridge is implicated in subunit movement. Contacts the P site tRNA; the 5S rRNA and some of its associated proteins might help stabilize positioning of ribosome-bound tRNAs. This is Large ribosomal subunit protein uL5 from Prosthecochloris aestuarii (strain DSM 271 / SK 413).